We begin with the raw amino-acid sequence, 337 residues long: tRNA pseudouridine synthase D (337 aa).

D77 acts as the Nucleophile in catalysis. The 157-residue stretch at 152–308 (GFPNYFTEQR…ARDFHWEFVE (157 aa)) folds into the TRUD domain.

Belongs to the pseudouridine synthase TruD family.

The catalysed reaction is uridine(13) in tRNA = pseudouridine(13) in tRNA. Functionally, responsible for synthesis of pseudouridine from uracil-13 in transfer RNAs. This is tRNA pseudouridine synthase D from Mannheimia succiniciproducens (strain KCTC 0769BP / MBEL55E).